The following is a 179-amino-acid chain: MNQLDLIKSSIKSIPNYPKVGIIFRDITSLLENPTAFKASIDAIVAEFKNKGITKVVGTESRGFIFGAPVALALGLPFVLVRKPHKLPRAVISQSYALEYGEDTLEMHLDSINQDDNVLVVDDLLATGGTIDATAKLIRQLGGQVKNAAFVIGLPDLGGKARLEQIGIKSFTLVEFDGH.

It belongs to the purine/pyrimidine phosphoribosyltransferase family. Homodimer.

The protein resides in the cytoplasm. It carries out the reaction AMP + diphosphate = 5-phospho-alpha-D-ribose 1-diphosphate + adenine. The protein operates within purine metabolism; AMP biosynthesis via salvage pathway; AMP from adenine: step 1/1. Catalyzes a salvage reaction resulting in the formation of AMP, that is energically less costly than de novo synthesis. This Haemophilus ducreyi (strain 35000HP / ATCC 700724) protein is Adenine phosphoribosyltransferase.